Consider the following 293-residue polypeptide: Movement protein BC1 (293 aa).

Positions 207-228 are disordered; sequence SWASRSTIGPSPSYAGSDQGDA. The span at 209–222 shows a compositional bias: polar residues; the sequence is ASRSTIGPSPSYAG.

The protein belongs to the begomovirus movement protein BC1 family. Binds to dimeric supercoiled plasmid DNA. In terms of processing, phosphorylated.

It is found in the host cell membrane. It localises to the host microsome membrane. The protein localises to the host endoplasmic reticulum membrane. Movement protein involved in the cell-to-cell and systemic transport of viral genomic DNA. Begomoviruses use 2 proteins to transport their DNA from cell to cell. The nuclear shuttle protein (NSP) shuttles it between nucleus and cytoplasm and the movement protein (MP) probably transports the DNA-NSP complex to the cell periphery and facilitates further movement across the cell wall. The polypeptide is Movement protein BC1 (Tomato golden mosaic virus (strain Yellow vein) (TGMV)).